Reading from the N-terminus, the 99-residue chain is Ubiquitin-related modifier 1 homolog (99 aa).

Gly-99 carries the post-translational modification 1-thioglycine. Residue Gly-99 forms a Glycyl lysine isopeptide (Gly-Lys) (interchain with K-? in acceptor proteins) linkage.

The protein belongs to the URM1 family. In terms of assembly, interacts with cer. C-terminal thiocarboxylation occurs in 2 steps, it is first acyl-adenylated (-COAMP) via the hesA/moeB/thiF part of the MOCS3 homolog, then thiocarboxylated (-COSH) via the rhodanese domain of the MOCS3 homolog.

Its subcellular location is the cytoplasm. Its pathway is tRNA modification; 5-methoxycarbonylmethyl-2-thiouridine-tRNA biosynthesis. Its function is as follows. Acts as a sulfur carrier required for 2-thiolation of mcm(5)S(2)U at tRNA wobble positions of cytosolic tRNA(Lys), tRNA(Glu) and tRNA(Gln). Serves as sulfur donor in tRNA 2-thiolation reaction by being thiocarboxylated (-COSH) at its C-terminus by MOCS3. The sulfur is then transferred to tRNA to form 2-thiolation of mcm(5)S(2)U. Also acts as a ubiquitin-like protein (UBL) that is covalently conjugated via an isopeptide bond to lysine residues of target proteins such as Prx2/Jafrac1, Ciao1, Eip71CD and GILT1. The thiocarboxylated form serves as substrate for conjugation and oxidative stress specifically induces the formation of UBL-protein conjugates. In Drosophila virilis (Fruit fly), this protein is Ubiquitin-related modifier 1 homolog.